The primary structure comprises 185 residues: Pro-adrenomedullin (185 aa).

Positions 1 to 21 are cleaved as a signal peptide; the sequence is MKLVSIALMLLGSLAVLGADT. R41 carries the arginine amide modification. A propeptide spanning residues 45–91 is cleaved from the precursor; the sequence is ELQASSSYPTGLVDEKTVPTQTLGLQDKQSTSSTPQASTQSTAHIRV. The segment at 68-89 is disordered; sequence GLQDKQSTSSTPQASTQSTAHI. Over residues 73–87 the composition is skewed to low complexity; it reads QSTSSTPQASTQSTA. C107 and C112 are disulfide-bonded. The segment at 125–185 is disordered; sequence TDKDKDGMAP…HQDISRVSRL (61 aa). At Y143 the chain carries Tyrosine amide. Residues 150–185 constitute a propeptide, preproAM C-terminal fragment; the sequence is SLPEVLRARTVESSQEQTHSAPASPAHQDISRVSRL. A compositionally biased stretch (polar residues) spans 160-170; the sequence is VESSQEQTHSA.

Belongs to the adrenomedullin family. Expressed in adrenal glands, lung, kidney, heart, spleen, duodenum and submandibular glands.

It localises to the secreted. In terms of biological role, adrenomedullin/ADM and proadrenomedullin N-20 terminal peptide/PAMP are peptide hormones that act as potent hypotensive and vasodilatator agents. Numerous actions have been reported most related to the physiologic control of fluid and electrolyte homeostasis. Functionally, ADM function is mediated by the CALCRL-RAMP2 and CALCRL-RAMP3 receptor complexes with ADM showing the highest potency for the CALCRL-RAMP2 complex. This Rattus norvegicus (Rat) protein is Pro-adrenomedullin.